Consider the following 390-residue polypeptide: MLQFELLATDPASHARRGTLTLNHGVVQTPIFMPVGTYGTVKGVMPRSLHEMGAQIILSNTFHLWMRPGLDVMQSFGGLHGFEQWNKPILTDSGGFQVWSLGAMRKITEEGVHFASPVNGDKLFMSPEVSMQIQTVLNSDIVMQLDECTPYETKGHKTTEAEARKSMEMSLRWARRSQDEFHRLGNPNALFGIVQGGMYKNLRQESLERLVEMDFPGYAVGGVSVGEPKDEMLDIMAHTPHRLPAHKPRYLMGVGTPEDLVQGVADGVDMFDCVMPTRNARNGTIFTRFGDLKIRNARHKADHQPLDPTCTCHACAGTEGVAWADGGRGGFSRAYLHHLDRCGEMLGPMLTTVHNLHYYLNLMREIRESLDAGRFGEFRARFAADRAQGV.

The active-site Proton acceptor is Asp92. Residues 92–96 (DSGGF), Asp146, Gln195, and Gly222 contribute to the substrate site. The interval 253-259 (GVGTPED) is RNA binding. Asp272 functions as the Nucleophile in the catalytic mechanism. The RNA binding; important for wobble base 34 recognition stretch occupies residues 277–281 (TRNAR). Zn(2+) contacts are provided by Cys310, Cys312, Cys315, and His354.

The protein belongs to the queuine tRNA-ribosyltransferase family. Homodimer. Within each dimer, one monomer is responsible for RNA recognition and catalysis, while the other monomer binds to the replacement base PreQ1. Zn(2+) is required as a cofactor.

The enzyme catalyses 7-aminomethyl-7-carbaguanine + guanosine(34) in tRNA = 7-aminomethyl-7-carbaguanosine(34) in tRNA + guanine. It functions in the pathway tRNA modification; tRNA-queuosine biosynthesis. Catalyzes the base-exchange of a guanine (G) residue with the queuine precursor 7-aminomethyl-7-deazaguanine (PreQ1) at position 34 (anticodon wobble position) in tRNAs with GU(N) anticodons (tRNA-Asp, -Asn, -His and -Tyr). Catalysis occurs through a double-displacement mechanism. The nucleophile active site attacks the C1' of nucleotide 34 to detach the guanine base from the RNA, forming a covalent enzyme-RNA intermediate. The proton acceptor active site deprotonates the incoming PreQ1, allowing a nucleophilic attack on the C1' of the ribose to form the product. After dissociation, two additional enzymatic reactions on the tRNA convert PreQ1 to queuine (Q), resulting in the hypermodified nucleoside queuosine (7-(((4,5-cis-dihydroxy-2-cyclopenten-1-yl)amino)methyl)-7-deazaguanosine). The polypeptide is Queuine tRNA-ribosyltransferase (Paracidovorax citrulli (strain AAC00-1) (Acidovorax citrulli)).